Consider the following 1114-residue polypeptide: TBC1 domain family member 8B (1114 aa).

GRAM domains are found at residues 145 to 212 and 285 to 353; these read LKFE…EKTS and EQFK…DKTD. Polar residues predominate over residues 399-411; the sequence is TEVAVSSDSTGPS. Residues 399–420 are disordered; the sequence is TEVAVSSDSTGPSENFEEQPLT. In terms of domain architecture, Rab-GAP TBC spans 486–673; that stretch reads GIPETLRGEL…NVVDCFFYDG (188 aa). The EF-hand domain occupies 857–892; sequence NRDSLALWTFRLLDENSDCLINFKEFSSAIDIMYNG. Disordered stretches follow at residues 938–957 and 1032–1061; these read SKPADEKETESGRNSPEKGK and LHSPASSASTARDSGPSEGNAESSVKKDLP. The segment covering 940–957 has biased composition (basic and acidic residues); that stretch reads PADEKETESGRNSPEKGK.

As to quaternary structure, interacts (via domain Rab-GAP TBC) with RAB11B (in GTP-bound form).

It is found in the cytoplasm. The protein resides in the cytosol. Involved in vesicular recycling, probably as a RAB11B GTPase-activating protein. In Mus musculus (Mouse), this protein is TBC1 domain family member 8B (Tbc1d8b).